Reading from the N-terminus, the 96-residue chain is UPF0235 protein CKO_04329 (96 aa).

The protein belongs to the UPF0235 family.

The chain is UPF0235 protein CKO_04329 from Citrobacter koseri (strain ATCC BAA-895 / CDC 4225-83 / SGSC4696).